We begin with the raw amino-acid sequence, 314 residues long: Serine/threonine-protein phosphatase CPPED1 (314 aa).

Ser-2 is subject to Phosphoserine. Residues 47–250 (KAWSTGDCDN…KVVFSGHYHR (204 aa)) are catalytic. Asp-53, Asp-90, Asn-127, and His-247 together coordinate a divalent metal cation. Ser-294 bears the Phosphoserine mark.

Belongs to the metallophosphoesterase superfamily. CPPED1 family. It depends on a divalent metal cation as a cofactor.

Its subcellular location is the cytoplasm. It catalyses the reaction O-phospho-L-seryl-[protein] + H2O = L-seryl-[protein] + phosphate. The catalysed reaction is O-phospho-L-threonyl-[protein] + H2O = L-threonyl-[protein] + phosphate. Its function is as follows. Protein phosphatase that dephosphorylates AKT family kinase specifically at 'Ser-473', blocking cell cycle progression and promoting cell apoptosis. May play an inhibitory role in glucose uptake by adipocytes. The sequence is that of Serine/threonine-protein phosphatase CPPED1 (CPPED1) from Pongo abelii (Sumatran orangutan).